Reading from the N-terminus, the 284-residue chain is Bifunctional protein FolD (284 aa).

NADP(+)-binding positions include 165–167, Ser190, and Val231; that span reads GRS.

It belongs to the tetrahydrofolate dehydrogenase/cyclohydrolase family. In terms of assembly, homodimer.

It carries out the reaction (6R)-5,10-methylene-5,6,7,8-tetrahydrofolate + NADP(+) = (6R)-5,10-methenyltetrahydrofolate + NADPH. The catalysed reaction is (6R)-5,10-methenyltetrahydrofolate + H2O = (6R)-10-formyltetrahydrofolate + H(+). The protein operates within one-carbon metabolism; tetrahydrofolate interconversion. Its function is as follows. Catalyzes the oxidation of 5,10-methylenetetrahydrofolate to 5,10-methenyltetrahydrofolate and then the hydrolysis of 5,10-methenyltetrahydrofolate to 10-formyltetrahydrofolate. In Natranaerobius thermophilus (strain ATCC BAA-1301 / DSM 18059 / JW/NM-WN-LF), this protein is Bifunctional protein FolD.